A 38-amino-acid polypeptide reads, in one-letter code: Zinc-containing ferredoxin (38 aa).

A compositionally biased stretch (polar residues) spans 1-11; the sequence is GIDPNFRTSRP. Positions 1–38 are disordered; sequence GIDPNFRTSRPVTGDHAGHKVYAPADPPVKEKALGIHG. Residues 1 to 38 are N-terminal extension; the sequence is GIDPNFRTSRPVTGDHAGHKVYAPADPPVKEKALGIHG. Residues His16 and His19 each contribute to the Zn(2+) site. Basic and acidic residues predominate over residues 28–38; it reads PVKEKALGIHG. Lys30 carries the N6-methyllysine modification. Residue His37 coordinates Zn(2+).

It depends on [3Fe-4S] cluster as a cofactor. [4Fe-4S] cluster is required as a cofactor. The cofactor is Zn(2+).

Its function is as follows. Ferredoxins are iron-sulfur proteins that transfer electrons in a wide variety of metabolic reactions. In Metallosphaera prunae, this protein is Zinc-containing ferredoxin (zfx).